The sequence spans 221 residues: Guanylate kinase (221 aa).

The 179-residue stretch at 20 to 198 folds into the Guanylate kinase-like domain; the sequence is GSLFMVVAPS…ALAELRTVVQ (179 aa). Residue 27-34 coordinates ATP; it reads APSGAGKS.

Belongs to the guanylate kinase family.

It localises to the cytoplasm. The enzyme catalyses GMP + ATP = GDP + ADP. Essential for recycling GMP and indirectly, cGMP. The chain is Guanylate kinase from Ralstonia nicotianae (strain ATCC BAA-1114 / GMI1000) (Ralstonia solanacearum).